We begin with the raw amino-acid sequence, 235 residues long: Sugar fermentation stimulation protein homolog (235 aa).

This sequence belongs to the SfsA family.

The sequence is that of Sugar fermentation stimulation protein homolog from Maricaulis maris (strain MCS10) (Caulobacter maris).